The sequence spans 452 residues: UPF0210 protein CHY_1509 (452 aa).

The protein belongs to the UPF0210 family. Homodimer.

This chain is UPF0210 protein CHY_1509, found in Carboxydothermus hydrogenoformans (strain ATCC BAA-161 / DSM 6008 / Z-2901).